We begin with the raw amino-acid sequence, 61 residues long: Metallothionein-1 (61 aa).

Residue Met-1 is modified to N-acetylmethionine. The segment at 1-29 (MDPNCSCPTGGSCTCAGSCKCKACRCPSC) is beta. Residues Cys-5, Cys-7, Cys-13, Cys-15, Cys-19, Cys-21, Cys-24, Cys-26, Cys-29, Cys-33, Cys-34, Cys-36, Cys-37, Cys-41, Cys-44, Cys-48, Cys-50, Cys-57, Cys-59, and Cys-60 each coordinate a divalent metal cation. The alpha stretch occupies residues 30-61 (KKSCCSCCPVGCAKCAQGCVCKGASDKCSCCA).

It belongs to the metallothionein superfamily. Type 1 family. As to quaternary structure, monomer.

Its function is as follows. Metallothioneins have a high content of cysteine residues that bind various heavy metals; these proteins are transcriptionally regulated by both heavy metals and glucocorticoids. In Bos taurus (Bovine), this protein is Metallothionein-1 (MT1).